The primary structure comprises 265 residues: Indole-3-glycerol phosphate synthase (265 aa).

This sequence belongs to the TrpC family.

It catalyses the reaction 1-(2-carboxyphenylamino)-1-deoxy-D-ribulose 5-phosphate + H(+) = (1S,2R)-1-C-(indol-3-yl)glycerol 3-phosphate + CO2 + H2O. It participates in amino-acid biosynthesis; L-tryptophan biosynthesis; L-tryptophan from chorismate: step 4/5. This Xanthomonas campestris pv. campestris (strain 8004) protein is Indole-3-glycerol phosphate synthase.